The chain runs to 306 residues: Type 3 secretion system translocon protein SctB (306 aa).

A helical transmembrane segment spans residues 128–152 (LMIAMAVVSGIMAATSTVASAFSIA).

Belongs to the SctB/YopD family. In terms of assembly, the core secretion machinery of the T3SS is composed of approximately 20 different proteins, including cytoplasmic components, a base, an export apparatus and a needle. This subunit is involved in the formation of a pore, called the translocon, in host membrane. Interacts with YopB/SctE and YopE. Together with YopB/SctE, forms a multimeric integral membrane complex with a mass of between 500 and 700 kDa. Interacts with its cognate chaperone SycD.

The protein resides in the secreted. The protein localises to the host membrane. In terms of biological role, component of the type III secretion system (T3SS), also called injectisome, which is used to inject bacterial effector proteins into eukaryotic host cells. YopB/SctE and YopD/SctB are inserted into the host membrane where they form a pore and allow the translocation of effector proteins into the cytosol of target cells. Its function is as follows. Involved in pathogenesis. Essential for the establishment of Yersinia infections in a mouse model system, but not for the targeting of effector Yops. May modulate the host's immune response at a distance from the site of infection. The chain is Type 3 secretion system translocon protein SctB from Yersinia enterocolitica.